Here is a 355-residue protein sequence, read N- to C-terminus: Peptide chain release factor 1 (355 aa).

N5-methylglutamine is present on Q233.

This sequence belongs to the prokaryotic/mitochondrial release factor family. Post-translationally, methylated by PrmC. Methylation increases the termination efficiency of RF1.

It is found in the cytoplasm. In terms of biological role, peptide chain release factor 1 directs the termination of translation in response to the peptide chain termination codons UAG and UAA. The chain is Peptide chain release factor 1 from Rickettsia typhi (strain ATCC VR-144 / Wilmington).